A 590-amino-acid polypeptide reads, in one-letter code: UvrABC system protein C (590 aa).

One can recognise a GIY-YIG domain in the interval 14–91; that stretch reads DQPGCYLMKD…IKKYDPKYNV (78 aa). Positions 196-231 constitute a UVR domain; that stretch reads NEVKKELEAKMLEASENLQFERAKEFRDQIAHIEST.

Belongs to the UvrC family. In terms of assembly, interacts with UvrB in an incision complex.

Its subcellular location is the cytoplasm. In terms of biological role, the UvrABC repair system catalyzes the recognition and processing of DNA lesions. UvrC both incises the 5' and 3' sides of the lesion. The N-terminal half is responsible for the 3' incision and the C-terminal half is responsible for the 5' incision. This chain is UvrABC system protein C, found in Bacillus licheniformis (strain ATCC 14580 / DSM 13 / JCM 2505 / CCUG 7422 / NBRC 12200 / NCIMB 9375 / NCTC 10341 / NRRL NRS-1264 / Gibson 46).